A 267-amino-acid polypeptide reads, in one-letter code: tRNA pseudouridine synthase A (267 aa).

Asp-54 serves as the catalytic Nucleophile. Tyr-114 contributes to the substrate binding site.

This sequence belongs to the tRNA pseudouridine synthase TruA family. As to quaternary structure, homodimer.

It carries out the reaction uridine(38/39/40) in tRNA = pseudouridine(38/39/40) in tRNA. In terms of biological role, formation of pseudouridine at positions 38, 39 and 40 in the anticodon stem and loop of transfer RNAs. This is tRNA pseudouridine synthase A from Tropheryma whipplei (strain TW08/27) (Whipple's bacillus).